A 620-amino-acid chain; its full sequence is Kelch-like protein 8 (620 aa).

Residues 1 to 10 are compositionally biased toward polar residues; it reads MASDSMSSKQ. Positions 1-35 are disordered; that stretch reads MASDSMSSKQARNHITKGKRQQQHQQIKNRSSISD. At alanine 2 the chain carries N-acetylalanine. Residues 11 to 22 are compositionally biased toward basic residues; that stretch reads ARNHITKGKRQQ. The segment covering 23 to 34 has biased composition (polar residues); that stretch reads QHQQIKNRSSIS. In terms of domain architecture, BTB spans 67 to 134; it reads CDVTLKVGSK…VYSSRLTLTV (68 aa). The 102-residue stretch at 169–270 folds into the BACK domain; the sequence is CLAVRAFAES…LPVDFLMGVV (102 aa). Kelch repeat units follow at residues 319 to 366, 367 to 413, 415 to 460, 462 to 507, 508 to 554, and 556 to 601; these read VLFC…SVEG, KVYA…SLGG, IYAI…ALVN, VYAV…KLHG, CLYV…TVMG, and IFAV…VCSC.

As to quaternary structure, component of the BCR(KLHL8) E3 ubiquitin ligase complex, at least composed of CUL3, KLHL8 and RBX1. Interacts with RAPSN.

The protein operates within protein modification; protein ubiquitination. Its function is as follows. Substrate-specific adapter of a BCR (BTB-CUL3-RBX1) E3 ubiquitin ligase complex required for The BCR(KLHL8) ubiquitin ligase complex mediates ubiquitination and degradation of RAPSN. The chain is Kelch-like protein 8 (KLHL8) from Homo sapiens (Human).